A 165-amino-acid chain; its full sequence is Growth arrest and DNA damage-inducible protein GADD45 alpha (165 aa).

T2 is modified (phosphothreonine).

Belongs to the GADD45 family. In terms of assembly, interacts with MAPK14. Predominantly monomeric but also forms dimers and other oligomers as concentration increases. Interacts with GADD45GIP1. Interacts weakly with PCNA. Interacts with AURKA, likely to compete with dimerization.

Its subcellular location is the nucleus. In T-cells, functions as a regulator of p38 MAPKs by inhibiting p88 phosphorylation and activity. Might affect PCNA interaction with some CDK (cell division protein kinase) complexes; stimulates DNA excision repair in vitro and inhibits entry of cells into S phase. This Homo sapiens (Human) protein is Growth arrest and DNA damage-inducible protein GADD45 alpha (GADD45A).